The sequence spans 64 residues: Large ribosomal subunit protein bL35c (64 aa).

It belongs to the bacterial ribosomal protein bL35 family.

The protein localises to the plastid. Its subcellular location is the chloroplast. The protein is Large ribosomal subunit protein bL35c of Phaeodactylum tricornutum (strain CCAP 1055/1).